The chain runs to 450 residues: UDP-N-acetylmuramoylalanine--D-glutamate ligase (450 aa).

119–125 (GSNGKTT) contributes to the ATP binding site.

The protein belongs to the MurCDEF family.

It is found in the cytoplasm. The enzyme catalyses UDP-N-acetyl-alpha-D-muramoyl-L-alanine + D-glutamate + ATP = UDP-N-acetyl-alpha-D-muramoyl-L-alanyl-D-glutamate + ADP + phosphate + H(+). It participates in cell wall biogenesis; peptidoglycan biosynthesis. In terms of biological role, cell wall formation. Catalyzes the addition of glutamate to the nucleotide precursor UDP-N-acetylmuramoyl-L-alanine (UMA). The polypeptide is UDP-N-acetylmuramoylalanine--D-glutamate ligase (Streptococcus pneumoniae serotype 19F (strain G54)).